The primary structure comprises 313 residues: Protoheme IX farnesyltransferase (313 aa).

Helical transmembrane passes span 35 to 55 (LVVFTALVGLVIAPVHLHPVL), 56 to 76 (AATSILCIAVGGGAAGALNMW), 98 to 118 (VSSPEAAAFGITLAIFSVATL), 120 to 140 (VLVNWLAGALLAFTIFFYAVV), 153 to 173 (IVIGGAAGALPPVVAWAAATG), 180 to 200 (IILFLIIFLWTPPHFWALALF), 226 to 246 (ILLYTIVLVTVAILPWPLGYF), 248 to 268 (AAYGLTSVALGAGMLWFAFNV), and 292 to 312 (LFLLFAVLPLEVAAHAVAAMI).

It belongs to the UbiA prenyltransferase family. Protoheme IX farnesyltransferase subfamily.

Its subcellular location is the cell inner membrane. It catalyses the reaction heme b + (2E,6E)-farnesyl diphosphate + H2O = Fe(II)-heme o + diphosphate. It functions in the pathway porphyrin-containing compound metabolism; heme O biosynthesis; heme O from protoheme: step 1/1. Converts heme B (protoheme IX) to heme O by substitution of the vinyl group on carbon 2 of heme B porphyrin ring with a hydroxyethyl farnesyl side group. This Afipia carboxidovorans (strain ATCC 49405 / DSM 1227 / KCTC 32145 / OM5) (Oligotropha carboxidovorans) protein is Protoheme IX farnesyltransferase.